We begin with the raw amino-acid sequence, 156 residues long: Endogenous retrovirus group K member 9 Pro protein (156 aa).

Residues 21-96 (FEGLVDTGAD…IPLNLWGRDL (76 aa)) enclose the Peptidase A2 domain. D26 is a catalytic residue. The G-patch domain maps to 111-156 (YSPTSQKIMTKRGYIPGKGLGKNEDGIKIPFEAKINQKREGIGYPF).

It belongs to the peptidase A2 family. HERV class-II K(HML-2) subfamily. In terms of assembly, active as a homodimer. Autoproteolytically processed at the N-terminus. Expected C-terminal autoprocessing not detected. The sequence shown is that of the processed Pro protein.

The catalysed reaction is Processing at the authentic HIV-1 PR recognition site and release of the mature p17 matrix and the p24 capsid protein, as a result of the cleavage of the -SQNY-|-PIVQ- cleavage site.. Functionally, retroviral proteases have roles in the processing of the primary translation products and the maturation of the viral particle. Endogenous Pro proteins may have kept, lost or modified their original function during evolution. The protein is Endogenous retrovirus group K member 9 Pro protein (ERVK-9) of Homo sapiens (Human).